Here is a 530-residue protein sequence, read N- to C-terminus: Alpha-(1,3)-fucosyltransferase 4 (530 aa).

2 disordered regions span residues 1–48 and 66–112; these read MRRL…RAVP and HLGG…STPA. The Cytoplasmic segment spans residues 1–147; the sequence is MRRLWGAARK…GGRRGWRRGR (147 aa). The span at 88-106 shows a compositional bias: basic and acidic residues; that stretch reads ASGERQRRLEPQLQHESRC. The helical; Signal-anchor for type II membrane protein transmembrane segment at 148 to 172 threads the bilayer; that stretch reads GLPWTVCVLAAAGLTCTALITYACW. At 173 to 530 the chain is on the lumenal side; it reads GQLPPLPWAS…IRNLASWFER (358 aa). N-linked (GlcNAc...) asparagine glycosylation is found at Asn-216 and Asn-315.

This sequence belongs to the glycosyltransferase 10 family. In terms of tissue distribution, expressed at low levels in bone marrow-derived mesenchymal stem cells. As to expression, expressed in cord blood immature promyelocytes and in peripheral blood myeloid and lymphoid cell populations.

The protein localises to the golgi apparatus. It localises to the golgi stack membrane. The enzyme catalyses a beta-D-galactosyl-(1-&gt;4)-N-acetyl-beta-D-glucosaminyl derivative + GDP-beta-L-fucose = a beta-D-galactosyl-(1-&gt;4)-[alpha-L-fucosyl-(1-&gt;3)]-N-acetyl-beta-D-glucosaminyl derivative + GDP + H(+). It carries out the reaction an N-acetyl-alpha-neuraminyl-(2-&gt;3)-beta-D-galactosyl-(1-&gt;4)-N-acetyl-beta-D-glucosaminyl derivative + GDP-beta-L-fucose = an alpha-Neu5Ac-(2-&gt;3)-beta-D-Gal-(1-&gt;4)-[alpha-L-Fuc-(1-&gt;3)]-beta-D-GlcNAc derivative + GDP + H(+). The catalysed reaction is an alpha-Neu5Ac-(2-&gt;3)-beta-D-Gal-(1-&gt;4)-beta-D-GlcNAc-(1-&gt;3)-beta-D-Gal-(1-&gt;4)-beta-D-GlcNAc derivative + GDP-beta-L-fucose = an alpha-Neu5Ac-(2-&gt;3)-beta-D-Gal-(1-&gt;4)-beta-D-GlcNAc-(1-&gt;3)-beta-D-Gal-(1-&gt;4)-[alpha-L-Fuc-(1-&gt;3)]-beta-D-GlcNAc derivative + GDP + H(+). It catalyses the reaction an alpha-Neu5Ac-(2-&gt;3)-beta-D-Gal-(1-&gt;4)-beta-D-GlcNAc6S derivative + GDP-beta-L-fucose = an alpha-Neu5Ac-(2-&gt;3)-beta-D-Gal-(1-&gt;4)-[alpha-L-Fuc-(1-&gt;3)]-beta-D-GlcNAc6S derivative + GDP + H(+). The protein operates within protein modification; protein glycosylation. Catalyzes alpha(1-&gt;3) linkage of fucosyl moiety transferred from GDP-beta-L-fucose to N-acetyl glucosamine (GlcNAc) within type 2 lactosamine (LacNAc, Gal-beta(1-&gt;4)GlcNAc) glycan attached to N- or O-linked glycoproteins. Robustly fucosylates nonsialylated distal LacNAc unit of the polylactosamine chain to form Lewis X antigen (CD15), a glycan determinant known to mediate important cellular functions in development and immunity. Fucosylates with lower efficiency sialylated LacNAc acceptors to form sialyl Lewis X and 6-sulfo sialyl Lewis X determinants that serve as recognition epitopes for C-type lectins. Together with FUT7 contributes to SELE, SELL and SELP selectin ligand biosynthesis and selectin-dependent lymphocyte homing, leukocyte migration and blood leukocyte homeostasis. In a cell type specific manner, may also fucosylate the internal LacNAc unit of the polylactosamine chain to form VIM-2 antigen that serves as recognition epitope for SELE. Its function is as follows. Does not generate Lewis X antigens. The chain is Alpha-(1,3)-fucosyltransferase 4 from Homo sapiens (Human).